The following is a 172-amino-acid chain: Probable tryptophan transport protein (172 aa).

The next 4 membrane-spanning stretches (helical) occupy residues 7-29 (VIMA…FLGG), 49-71 (VQNV…AFPA), 104-126 (AVLT…LLIV), and 136-158 (FAAV…YPIV).

It belongs to the vitamin uptake transporter (VUT/ECF) (TC 2.A.88) family. TrpP subfamily.

It is found in the cell membrane. In terms of biological role, probably involved in tryptophan uptake. The chain is Probable tryptophan transport protein (trpP) from Bacillus subtilis (strain 168).